A 337-amino-acid chain; its full sequence is Protein-methionine-sulfoxide reductase catalytic subunit MsrP (337 aa).

The tat-type signal signal peptide spans 1–54; it reads MLIKLPRSSECKASEITPEGIYLSRRTLLGGSLAGLALGALPGGVGAAQMSRYA. Mo-molybdopterin contacts are provided by residues N94, 97 to 98, C152, T187, N237, R242, and 253 to 255; these read YE and SIK.

Belongs to the MsrP family. In terms of assembly, heterodimer of a catalytic subunit (MsrP) and a heme-binding subunit (MsrQ). Mo-molybdopterin serves as cofactor. In terms of processing, predicted to be exported by the Tat system. The position of the signal peptide cleavage has not been experimentally proven.

It localises to the periplasm. The enzyme catalyses L-methionyl-[protein] + a quinone + H2O = L-methionyl-(S)-S-oxide-[protein] + a quinol. It carries out the reaction L-methionyl-[protein] + a quinone + H2O = L-methionyl-(R)-S-oxide-[protein] + a quinol. Functionally, part of the MsrPQ system that repairs oxidized periplasmic proteins containing methionine sulfoxide residues (Met-O), using respiratory chain electrons. Thus protects these proteins from oxidative-stress damage caused by reactive species of oxygen and chlorine generated by the host defense mechanisms. MsrPQ is essential for the maintenance of envelope integrity under bleach stress, rescuing a wide series of structurally unrelated periplasmic proteins from methionine oxidation. The catalytic subunit MsrP is non-stereospecific, being able to reduce both (R-) and (S-) diastereoisomers of methionine sulfoxide. The chain is Protein-methionine-sulfoxide reductase catalytic subunit MsrP from Pseudomonas putida (strain ATCC 47054 / DSM 6125 / CFBP 8728 / NCIMB 11950 / KT2440).